The chain runs to 706 residues: Choline transporter-like protein 2 (706 aa).

The Cytoplasmic portion of the chain corresponds to 1-33 (MGKEQQLYYGKHGTPQKYDPAFRGPIYNRGCTD). Thr14 is subject to Phosphothreonine. A helical transmembrane segment spans residues 34–54 (IICCVFLFLAIVGYVAVGIIA). Residues 55 to 232 (WTHGDPRKVI…RIFEDYTVSW (178 aa)) are Extracellular-facing. N-linked (GlcNAc...) asparagine glycosylation is found at Asn187 and Asn200. A helical membrane pass occupies residues 233–253 (YWIIIGLIIAMVLSLLFIILL). The Cytoplasmic segment spans residues 254 to 256 (RFL). A helical membrane pass occupies residues 257 to 277 (AGIMVWVMIVMVILVLGYGIL). Residues 278–315 (HCYMEYARLRGEAGSDVSLVDLGFQTDFRVYLHLRQTW) lie on the Extracellular side of the membrane. The helical transmembrane segment at 316–336 (VAFMIILSIVEVIIILLLIFL) threads the bilayer. The Cytoplasmic portion of the chain corresponds to 337 to 364 (RKRILIAIALIKEASRAVGYVMCSLLYP). The helical transmembrane segment at 365-385 (LVTFFLLCLCIAYWASTAIFL) threads the bilayer. Topologically, residues 386 to 457 (STSNEAVYKI…FNVFMFFWLA (72 aa)) are extracellular. N-linked (GlcNAc...) asparagine glycans are attached at residues Asn397 and Asn417. A helical transmembrane segment spans residues 458-480 (NFVLALGQVTLAGAFASYYWAMN). The Cytoplasmic portion of the chain corresponds to 481–504 (KPDDLPAFPLFSAFGRALRYHTGS). A helical membrane pass occupies residues 505-525 (LAFGSLLLAIVQVIRVILEYL). Over 526–563 (DQRLKAAENKFAKFLMSCLKCCFWCLEKFIKFLNRNAY) the chain is Extracellular. The helical transmembrane segment at 564–584 (IMIAIYGTNFCTSARNAFFLL) threads the bilayer. At 585 to 599 (MRNIIRVAVLDKVTD) the chain is on the cytoplasmic side. Residues 600–620 (FLFLLGKLLIVGSVGILAFFF) form a helical membrane-spanning segment. Over 621–638 (FTHRIRIVQDTAPSLNYY) the chain is Extracellular. The helical transmembrane segment at 639-659 (WVPVVTVVIGSYLIAHGFFSV) threads the bilayer. Over 660–706 (YGMCVDTLFLCFLEDLERNDGTPERPYFMSLTLKKILNKTNKRQAEA) the chain is Cytoplasmic.

It belongs to the CTL (choline transporter-like) family. In terms of assembly, interacts with COCH. N-glycosylated.

Its subcellular location is the cell membrane. The protein localises to the mitochondrion outer membrane. It catalyses the reaction choline(out) + n H(+)(in) = choline(in) + n H(+)(out). It carries out the reaction ethanolamine(out) + n H(+)(in) = ethanolamine(in) + n H(+)(out). In terms of biological role, choline/H+ antiporter, mainly in mitochodria. Also acts as a low-affinity ethanolamine/H+ antiporter, regulating the supply of extracellular ethanolamine (Etn) for the CDP-Etn pathway, redistribute intracellular Etn and balance the CDP-Cho and CDP-Etn arms of the Kennedy pathway. This is Choline transporter-like protein 2 (SLC44A2) from Bos taurus (Bovine).